Here is a 231-residue protein sequence, read N- to C-terminus: Phosphatidylserine decarboxylase proenzyme (231 aa).

Ser-189 (schiff-base intermediate with substrate; via pyruvic acid) is an active-site residue. Ser-189 is modified (pyruvic acid (Ser); by autocatalysis).

The protein belongs to the phosphatidylserine decarboxylase family. PSD-A subfamily. In terms of assembly, heterodimer of a large membrane-associated beta subunit and a small pyruvoyl-containing alpha subunit. The cofactor is pyruvate. Post-translationally, is synthesized initially as an inactive proenzyme. Formation of the active enzyme involves a self-maturation process in which the active site pyruvoyl group is generated from an internal serine residue via an autocatalytic post-translational modification. Two non-identical subunits are generated from the proenzyme in this reaction, and the pyruvate is formed at the N-terminus of the alpha chain, which is derived from the carboxyl end of the proenzyme. The post-translation cleavage follows an unusual pathway, termed non-hydrolytic serinolysis, in which the side chain hydroxyl group of the serine supplies its oxygen atom to form the C-terminus of the beta chain, while the remainder of the serine residue undergoes an oxidative deamination to produce ammonia and the pyruvoyl prosthetic group on the alpha chain.

It is found in the cell membrane. It carries out the reaction a 1,2-diacyl-sn-glycero-3-phospho-L-serine + H(+) = a 1,2-diacyl-sn-glycero-3-phosphoethanolamine + CO2. It participates in phospholipid metabolism; phosphatidylethanolamine biosynthesis; phosphatidylethanolamine from CDP-diacylglycerol: step 2/2. In terms of biological role, catalyzes the formation of phosphatidylethanolamine (PtdEtn) from phosphatidylserine (PtdSer). The protein is Phosphatidylserine decarboxylase proenzyme of Chelativorans sp. (strain BNC1).